The following is a 978-amino-acid chain: RMPSGPGHYGASAETPGPRPPLCPASSCCLPTEAMGPRALLVLLMATAWHAQGVPVIQPSGPELVVEPGTTVTLRCVGNGSVEWDGPISPHWNLDLDPPSSILTTNNATFQNTGTYHCTEPGNPRGGNATIHLYVKDPARPWKVLAQEVTVLEGQDALLPCLLTDPALEAGVSLVRVRGRPVLRQTNYSFSPWHGFTIHKAKFIENHVYQCSARVDGRTVTSMGIWLKVQKDISGPATLTLEPAELVRIQGEAAQIVCSASNIDVNFDVSLRHGDTKLTISQQSDFHDNRYQKVLTLNLDHVSFQDAGNYSCTATNAWGNHSASMVFRVVESAYSNLTSEQSLLQEVTVGEKVDLQVKVEAYPGLESFNWTYLGPFSDYQDKLDFVTIKDTYRYTSTLSLPRLKRSESGRYSFLARNAGGQNALTFELTLRYPPEVRVTMTLINGSDTLLCEASGYPQPSVTWVQCRSHTDRCDESAGLVLEDSHSEVLSQVPFYEVIVHSLLAIGTLEHNRTYECRAFNSVGNSSQTFWPISIGAHTPLPDELLFTPVLLTCMSIMALLLLLLLLLLYKYKQKPKYQVRWKIIESYEGNSYTFIDPTQLPYNEKWEFPRNNLQFGKTLGTGAFGKVVEATAFGLGKEDAVLKVAVKMLKSTAHADEKEALMSELKIMSHLGQHENIVNLLGACTHGGPVLVITEYCCYGDLLNFLRRQAEAMLGPSLSVGQDPEAGAGYKNIHLEKKYVRRDSGFSSQGVDTYVEMRPVSTSSSNDSFSEEDLGKEDGRPLELRDLLHFSSQVAQGMAFLASKNCIHRDVAARNVLLTSGRVAKIGDFGLARDIMNDSNYIVKGNARLPVKWMAPESIFDCVYTVQSDVWSYGILLWEIFSLGLNPYPGILVNSKFYKLVKDGYQMAQPAFAPKNIYSIMQACWALEPTRRPTFQQICSLLQKQAQEDRRVPNYTNLPSSSSSRLLRPWQRTPPVAR.

Topologically, residues 1 to 543 are extracellular; that stretch reads RMPSGPGHYG…IGAHTPLPDE (543 aa). Ig-like C2-type domains follow at residues 55-134, 141-231, 236-331, 333-431, and 434-533; these read PVIQ…IHLY, PWKV…KVQK, PATL…RVVE, AYSN…LTLR, and PEVR…WPIS. The cysteines at positions 76 and 118 are disulfide-linked. Residues asparagine 79, asparagine 107, asparagine 128, asparagine 187, asparagine 309, asparagine 320, asparagine 336, asparagine 369, asparagine 444, asparagine 511, and asparagine 524 are each glycosylated (N-linked (GlcNAc...) asparagine; by host). 2 cysteine pairs are disulfide-bonded: cysteine 161-cysteine 211 and cysteine 258-cysteine 312. Cysteine 451 and cysteine 516 are oxidised to a cystine. A helical membrane pass occupies residues 544-568; the sequence is LLFTPVLLTCMSIMALLLLLLLLLL. Residues 569-978 are Cytoplasmic-facing; it reads YKYKQKPKYQ…PWQRTPPVAR (410 aa). The Protein kinase domain maps to 613-942; that stretch reads LQFGKTLGTG…PTFQQICSLL (330 aa). Residues 619-627 and lysine 647 contribute to the ATP site; that span reads LGTGAFGKV. The active-site Proton acceptor is aspartate 810. Residue tyrosine 841 is modified to Phosphotyrosine; by autocatalysis. The interval 952–978 is disordered; it reads VPNYTNLPSSSSSRLLRPWQRTPPVAR. Low complexity predominate over residues 958–969; the sequence is LPSSSSSRLLRP. The residue at position 973 (threonine 973) is a Phosphothreonine.

The protein belongs to the protein kinase superfamily. Tyr protein kinase family. CSF-1/PDGF receptor subfamily.

Its subcellular location is the membrane. It carries out the reaction L-tyrosyl-[protein] + ATP = O-phospho-L-tyrosyl-[protein] + ADP + H(+). In terms of biological role, truncated version of the receptor for colony-stimulating factor 1 (CSF-1). In Felidae (cat family), this protein is Tyrosine-protein kinase transforming protein fms (V-FMS).